We begin with the raw amino-acid sequence, 189 residues long: HGPRTase-like protein 2 (189 aa).

Belongs to the purine/pyrimidine phosphoribosyltransferase family. Archaeal HPRT subfamily.

May catalyze a purine salvage reaction, the substrate is unknown. This is HGPRTase-like protein 2 from Haloarcula marismortui (strain ATCC 43049 / DSM 3752 / JCM 8966 / VKM B-1809) (Halobacterium marismortui).